Reading from the N-terminus, the 263-residue chain is Acyl-[acyl-carrier-protein]--UDP-N-acetylglucosamine O-acyltransferase (263 aa).

This sequence belongs to the transferase hexapeptide repeat family. LpxA subfamily. Homotrimer.

It is found in the cytoplasm. It carries out the reaction a (3R)-hydroxyacyl-[ACP] + UDP-N-acetyl-alpha-D-glucosamine = a UDP-3-O-[(3R)-3-hydroxyacyl]-N-acetyl-alpha-D-glucosamine + holo-[ACP]. Its pathway is glycolipid biosynthesis; lipid IV(A) biosynthesis; lipid IV(A) from (3R)-3-hydroxytetradecanoyl-[acyl-carrier-protein] and UDP-N-acetyl-alpha-D-glucosamine: step 1/6. Involved in the biosynthesis of lipid A, a phosphorylated glycolipid that anchors the lipopolysaccharide to the outer membrane of the cell. In Xanthomonas axonopodis pv. citri (strain 306), this protein is Acyl-[acyl-carrier-protein]--UDP-N-acetylglucosamine O-acyltransferase.